Here is a 160-residue protein sequence, read N- to C-terminus: 6-hydroxypseudooxynicotine dehydrogenase complex subunit beta (160 aa).

The 2Fe-2S ferredoxin-type domain maps to 4-80 (FRLTVEVNGV…NSRIETVESL (77 aa)). Residues cysteine 42, cysteine 47, cysteine 50, cysteine 62, cysteine 101, cysteine 104, cysteine 137, and cysteine 139 each coordinate [2Fe-2S] cluster.

As to quaternary structure, heterohexamer of 2 alpha (kdhA), 2 beta (kdhB) and 2 gamma (kdhC) subunit. Dimer of heterotrimers. [2Fe-2S] cluster serves as cofactor.

It catalyses the reaction 6-hydroxypseudooxynicotine + A + H2O = 2,6-dihydroxypseudooxynicotine + AH2. The protein operates within alkaloid degradation; nicotine degradation. Its function is as follows. Molybdo-flavoprotein enzyme complex involved in nicotine degradation. The subunit gamma (large subunit) contains the substrate-binding sites, the subunit alpha (medium subunit) binds FAD and the subunit beta (small subunit) has a 2Fe-2S ferredoxin-type domain which binds 2 2Fe-2S clusters. The protein is 6-hydroxypseudooxynicotine dehydrogenase complex subunit beta (kdhB) of Paenarthrobacter nicotinovorans (Arthrobacter nicotinovorans).